Reading from the N-terminus, the 526-residue chain is Thioredoxin reductase 2, mitochondrial (526 aa).

The transit peptide at 1–36 directs the protein to the mitochondrion; that stretch reads MAAIVAALRGSSGRFRPQTRVLTRGTRGAAGAASAA. 43–72 serves as a coordination point for FAD; it reads DLLVIGGGSGGLACAKEAAQLGRKVAVADY. N6-succinyllysine is present on lysine 81. A disulfide bridge connects residues cysteine 88 and cysteine 93. An N6-succinyllysine mark is found at lysine 177 and lysine 331. Histidine 499 (proton acceptor) is an active-site residue. The cysteinyl-selenocysteine (Cys-Sec) cross-link spans 524–525; that stretch reads CU. Position 525 (selenocysteine 525) is a non-standard amino acid, selenocysteine.

Belongs to the class-I pyridine nucleotide-disulfide oxidoreductase family. As to quaternary structure, homodimer. Requires FAD as cofactor. Expressed in liver, kidney, adrenal gland and heart.

The protein localises to the mitochondrion. It carries out the reaction [thioredoxin]-dithiol + NADP(+) = [thioredoxin]-disulfide + NADPH + H(+). In terms of biological role, involved in the control of reactive oxygen species levels and the regulation of mitochondrial redox homeostasis. Maintains mitochondrial thioredoxin in a reduced state. May play a role in redox-regulated cell signaling. This is Thioredoxin reductase 2, mitochondrial (Txnrd2) from Rattus norvegicus (Rat).